The primary structure comprises 741 residues: Polyribonucleotide nucleotidyltransferase (741 aa).

The Mg(2+) site is built by Asp-489 and Asp-495. The KH domain maps to 556–615 (PKIDSIQIPVDKIKVVIGKGGETIDKIIAETGVTIDIDEEGLVQIFSSDQDAIDRAKTII). The S1 motif domain maps to 625–693 (GEVYTVPVVR…EKGRVDASIK (69 aa)). Residues 695–741 (LLPKPEKNEDGENGEEHRHCCCSHHKPDHHNESVEAPKKSDESETKE) are disordered. Composition is skewed to basic and acidic residues over residues 698 to 713 (KPEK…EHRH) and 723 to 741 (HHNE…ETKE).

Belongs to the polyribonucleotide nucleotidyltransferase family. It depends on Mg(2+) as a cofactor.

The protein localises to the cytoplasm. It catalyses the reaction RNA(n+1) + phosphate = RNA(n) + a ribonucleoside 5'-diphosphate. Functionally, involved in mRNA degradation. Catalyzes the phosphorolysis of single-stranded polyribonucleotides processively in the 3'- to 5'-direction. The sequence is that of Polyribonucleotide nucleotidyltransferase from Streptococcus thermophilus (strain CNRZ 1066).